A 606-amino-acid polypeptide reads, in one-letter code: Vacuolar calcium ion transporter (606 aa).

A disordered region spans residues 1-110; sequence MSPPRRVSFP…NSLDPNPGLM (110 aa). At 1–137 the chain is on the cytoplasmic side; the sequence is MSPPRRVSFP…PTYWGSMKAA (137 aa). Over residues 18-30 the composition is skewed to low complexity; sequence PPLADSPLSSPKL. A compositionally biased stretch (polar residues) spans 36-56; it reads QSSSTPIVSSNLPTDTTNSAS. Residues 138–158 traverse the membrane as a helical segment; it reads ITSTWLNVLLVFIPIGWALYL. The Vacuolar portion of the chain corresponds to 159–170; sequence AKHNGGKDSISD. Residues 171–191 form a helical membrane-spanning segment; that stretch reads TAVFCCTFIAIIPLAGLLGFA. The Cytoplasmic segment spans residues 192–204; the sequence is TEEAALRLGQTLG. Residues 205 to 225 traverse the membrane as a helical segment; it reads GLLNATLGNAVELIVAILALI. At 226 to 236 the chain is on the vacuolar side; it reads KCELQVVQSSL. A helical membrane pass occupies residues 237–257; sequence VGSILSNILLVLGMCFFAGGV. At 258–272 the chain is on the cytoplasmic side; it reads RFAEQAIKSTAAQLN. A helical membrane pass occupies residues 273–293; sequence ASLLLIAVIAVLIPSAFHFSI. The Vacuolar segment spans residues 294–313; it reads SSSTSNTDASELANGEGADL. Residues 314–334 traverse the membrane as a helical segment; that stretch reads LSMSHAVSILLLILYLGYLLF. The Cytoplasmic portion of the chain corresponds to 335–437; that stretch reads QMWTHATYYV…EEEEETPQMN (103 aa). The disordered stretch occupies residues 376-434; it reads DEEESYSTATTVSDAAVPPSARAEGGEVPATHGPGTAAAETGNRVEHEDAEEEEEEETP. Over residues 423–433 the composition is skewed to acidic residues; that stretch reads EDAEEEEEEET. The helical transmembrane segment at 438–458 threads the bilayer; sequence VVCTIALMVIDTVLVGVTAEF. The Vacuolar segment spans residues 459–477; the sequence is LVDSINGMVESNPSLSAEW. The helical transmembrane segment at 478–498 threads the bilayer; the sequence is VGLILLPIVGNAAEHFTAVSV. Over 499 to 505 the chain is Cytoplasmic; the sequence is SVKDKLD. The helical transmembrane segment at 506–526 threads the bilayer; it reads LSISVAVGSSIQIALFVIPVI. At 527–535 the chain is on the vacuolar side; that stretch reads ELLAWTIGK. A helical transmembrane segment spans residues 536–556; that stretch reads PMTLLFDPYESIVLFLSVLIV. At 557–566 the chain is on the cytoplasmic side; the sequence is NQTLADGRSN. Residues 567 to 587 form a helical membrane-spanning segment; sequence WMEGMVLMMLYIIIAVSFWYY. At 588 to 606 the chain is on the vacuolar side; it reads PGSTTATLLGCQDSSSVTG.

This sequence belongs to the Ca(2+):cation antiporter (CaCA) (TC 2.A.19) family.

Its subcellular location is the vacuole membrane. Has a role in promoting intracellular calcium ion sequestration via the exchange of calcium ions for hydrogen ions across the vacuolar membrane. The polypeptide is Vacuolar calcium ion transporter (Cryptococcus neoformans var. grubii serotype A (strain H99 / ATCC 208821 / CBS 10515 / FGSC 9487) (Filobasidiella neoformans var. grubii)).